The following is a 356-amino-acid chain: MIETDKLATEQRIIAATPASSHEEVFERALRPRQLDDYVGQEKVRGQLEIFIEAAKRRSEPLDHVLLFGPPGLGKTTLAHIIAREMGVNLRQTSGPVLERAGDLAALLTNLEANDVLFIDEIHRLSPVVEEILYPALEDYQIDIMIGEGPAARSVKLDLQPFTLVGATTRAGMLTNPLRDRFGIVARLEFYDAEQLSRIVRRSASLLNAQIDPNGALEIAKRARGTPRIANRLLRRVRDFAEVKADGQITAAVADAALAMLDVDPVGFDLMDRKLLEAILYKFDGGPVGIDNLAAAIGEERDTIEDVLEPYLIQQGFLQRTPRGRVATLLTYRHFGLSVPDARRTERDEWDTPDGK.

Positions 4–191 are large ATPase domain (RuvB-L); it reads TDKLATEQRI…FGIVARLEFY (188 aa). ATP contacts are provided by residues leucine 30, arginine 31, glycine 72, lysine 75, threonine 76, threonine 77, 138–140, arginine 181, tyrosine 191, and arginine 228; that span reads EDY. Threonine 76 is a binding site for Mg(2+). Residues 192–262 form a small ATPAse domain (RuvB-S) region; it reads DAEQLSRIVR…VADAALAMLD (71 aa). The interval 265–356 is head domain (RuvB-H); it reads PVGFDLMDRK…RDEWDTPDGK (92 aa). Positions 301, 320, and 325 each coordinate DNA.

Belongs to the RuvB family. In terms of assembly, homohexamer. Forms an RuvA(8)-RuvB(12)-Holliday junction (HJ) complex. HJ DNA is sandwiched between 2 RuvA tetramers; dsDNA enters through RuvA and exits via RuvB. An RuvB hexamer assembles on each DNA strand where it exits the tetramer. Each RuvB hexamer is contacted by two RuvA subunits (via domain III) on 2 adjacent RuvB subunits; this complex drives branch migration. In the full resolvosome a probable DNA-RuvA(4)-RuvB(12)-RuvC(2) complex forms which resolves the HJ.

It is found in the cytoplasm. It catalyses the reaction ATP + H2O = ADP + phosphate + H(+). Its function is as follows. The RuvA-RuvB-RuvC complex processes Holliday junction (HJ) DNA during genetic recombination and DNA repair, while the RuvA-RuvB complex plays an important role in the rescue of blocked DNA replication forks via replication fork reversal (RFR). RuvA specifically binds to HJ cruciform DNA, conferring on it an open structure. The RuvB hexamer acts as an ATP-dependent pump, pulling dsDNA into and through the RuvAB complex. RuvB forms 2 homohexamers on either side of HJ DNA bound by 1 or 2 RuvA tetramers; 4 subunits per hexamer contact DNA at a time. Coordinated motions by a converter formed by DNA-disengaged RuvB subunits stimulates ATP hydrolysis and nucleotide exchange. Immobilization of the converter enables RuvB to convert the ATP-contained energy into a lever motion, pulling 2 nucleotides of DNA out of the RuvA tetramer per ATP hydrolyzed, thus driving DNA branch migration. The RuvB motors rotate together with the DNA substrate, which together with the progressing nucleotide cycle form the mechanistic basis for DNA recombination by continuous HJ branch migration. Branch migration allows RuvC to scan DNA until it finds its consensus sequence, where it cleaves and resolves cruciform DNA. The sequence is that of Holliday junction branch migration complex subunit RuvB from Burkholderia cenocepacia (strain HI2424).